The following is a 152-amino-acid chain: uncharacterized protein (152 aa).

It belongs to the antirestriction protein family.

This is an uncharacterized protein from Escherichia coli (strain K12).